A 602-amino-acid chain; its full sequence is Probable HECT-type ubiquitin ligase-interacting protein creD (602 aa).

Disordered regions lie at residues E375–S398 and T457–P499. A compositionally biased stretch (low complexity) spans P463–P475. Positions L477–I492 are enriched in basic and acidic residues.

It belongs to the arrestin family. As to quaternary structure, interacts with hulA.

Component of the regulatory network controlling carbon source utilization through ubiquitination and deubiquitination involving creA, creB, creC, creD and acrB. May be involved in signaling by recognizing appropriately phosphorylated substrates via its arrestin domains and then recruit a HECT-type ubiquitin ligase such as hulA, leading to ubiquitination of the substrate, providing a link between ubiquitination and phosphorylation in protein regulation and stability. In Aspergillus clavatus (strain ATCC 1007 / CBS 513.65 / DSM 816 / NCTC 3887 / NRRL 1 / QM 1276 / 107), this protein is Probable HECT-type ubiquitin ligase-interacting protein creD (creD).